Consider the following 208-residue polypeptide: Probable GTP-binding protein EngB (208 aa).

The region spanning 23 to 205 (LTSEMVILGR…RQTLLKYLLT (183 aa)) is the EngB-type G domain. GTP is bound by residues 31-38 (GRSNVGKS), 57-61 (GKTRL), 84-87 (DLPG), 154-157 (TKFD), and 182-184 (FNA). Residues S38 and T59 each coordinate Mg(2+).

It belongs to the TRAFAC class TrmE-Era-EngA-EngB-Septin-like GTPase superfamily. EngB GTPase family. Requires Mg(2+) as cofactor.

In terms of biological role, necessary for normal cell division and for the maintenance of normal septation. This chain is Probable GTP-binding protein EngB, found in Helicobacter pylori (strain G27).